Reading from the N-terminus, the 309-residue chain is Taste receptor type 2 member 20 (309 aa).

Over 1–6 (MMSFLH) the chain is Extracellular. A helical transmembrane segment spans residues 7-27 (IVFSILVVVAFILGNFANGFI). The Cytoplasmic portion of the chain corresponds to 28-46 (ALINFIAWVKRQKISSADQ). The chain crosses the membrane as a helical span at residues 47–67 (IIAALAVSRVGLLWVILLHWY). Residues 68–79 (STVLNPTSSNLK) are Extracellular-facing. Residues 80–100 (VIIFISNAWAVTNHFSIWLAT) form a helical membrane-spanning segment. Topologically, residues 101-125 (SLSIFYLLKIVNFSRLIFHHLKRKA) are cytoplasmic. The chain crosses the membrane as a helical span at residues 126–146 (KSVVLVIVLGSLFFLVCXLVM). Topologically, residues 147 to 178 (KNTYINVWTEECEGNVTWKIKLRNAMHLSNLT) are extracellular. The helical transmembrane segment at 179–199 (VAMLANLIPFTLTLISFLLLI) threads the bilayer. Residues 200–229 (YSLCKHLKKMQLHGKGSQDPSTKIHIKALQ) lie on the Cytoplasmic side of the membrane. The chain crosses the membrane as a helical span at residues 230–250 (TVTSFLILLAIYFLCLITSFW). Residues 251–259 (NSKMRPKEI) are Extracellular-facing. A helical membrane pass occupies residues 260-280 (VLMLCQAFGIIYPSFHSFILI). Topologically, residues 281–309 (WGNKTLKQTFLSVLWQVTCWAKGQNQSTP) are cytoplasmic.

It belongs to the G-protein coupled receptor T2R family.

It localises to the membrane. Its function is as follows. Receptor that may play a role in the perception of bitterness and is gustducin-linked. May play a role in sensing the chemical composition of the gastrointestinal content. The activity of this receptor may stimulate alpha gustducin, mediate PLC-beta-2 activation and lead to the gating of TRPM5. This chain is Taste receptor type 2 member 20 (TAS2R20), found in Pan troglodytes (Chimpanzee).